Here is a 273-residue protein sequence, read N- to C-terminus: Co-chaperone protein DjlA (273 aa).

Topologically, residues 1–6 (MHYWGK) are periplasmic. A helical membrane pass occupies residues 7-31 (LLGLIFGVVSGAGFWGIVIGLFIGH). Residues 32–273 (MLDRASVRGN…DLIKKEKGFK (242 aa)) are Cytoplasmic-facing. The region spanning 207–273 (DACKVLGVRE…DLIKKEKGFK (67 aa)) is the J domain.

Homodimer.

It localises to the cell inner membrane. In terms of biological role, regulatory DnaK co-chaperone. Direct interaction between DnaK and DjlA is needed for the induction of the wcaABCDE operon, involved in the synthesis of a colanic acid polysaccharide capsule, possibly through activation of the RcsB/RcsC phosphotransfer signaling pathway. The colanic acid capsule may help the bacterium survive conditions outside the host. The polypeptide is Co-chaperone protein DjlA (Photorhabdus laumondii subsp. laumondii (strain DSM 15139 / CIP 105565 / TT01) (Photorhabdus luminescens subsp. laumondii)).